We begin with the raw amino-acid sequence, 55 residues long: Large ribosomal subunit protein bL33 (55 aa).

The protein belongs to the bacterial ribosomal protein bL33 family.

This Rhodospirillum centenum (strain ATCC 51521 / SW) protein is Large ribosomal subunit protein bL33.